The chain runs to 446 residues: Anthranilate N-benzoyltransferase protein 2 (446 aa).

Catalysis depends on proton acceptor residues His-164 and Asp-393.

Belongs to the plant acyltransferase family. In terms of processing, N-terminus is blocked.

It carries out the reaction anthranilate + benzoyl-CoA = N-benzoylanthranilate + CoA. It participates in phytoalexin biosynthesis; methoxydianthramide B biosynthesis. Its function is as follows. Catalyzes the formation of N-benzoylanthranilate, in the course of methoxydianthramide B, a phytoalexin. Phytoalexins are produced in response to infection by parasites, and are essential for the expression of disease resistance. In Dianthus caryophyllus (Carnation), this protein is Anthranilate N-benzoyltransferase protein 2 (HCBT2).